We begin with the raw amino-acid sequence, 448 residues long: tRNA-2-methylthio-N(6)-dimethylallyladenosine synthase (448 aa).

The region spanning 3–118 is the MTTase N-terminal domain; sequence KKVFIKTFGC…LPELLNARAA (116 aa). Residues Cys-12, Cys-49, Cys-81, Cys-155, Cys-159, and Cys-162 each coordinate [4Fe-4S] cluster. The Radical SAM core domain maps to 141 to 374; sequence RVEGASAFVS…QAVINRNILE (234 aa). The 64-residue stretch at 377–440 folds into the TRAM domain; sequence QERVGTVQRL…TYTLRGEVVM (64 aa).

Belongs to the methylthiotransferase family. MiaB subfamily. In terms of assembly, monomer. Requires [4Fe-4S] cluster as cofactor.

It is found in the cytoplasm. The catalysed reaction is N(6)-dimethylallyladenosine(37) in tRNA + (sulfur carrier)-SH + AH2 + 2 S-adenosyl-L-methionine = 2-methylsulfanyl-N(6)-dimethylallyladenosine(37) in tRNA + (sulfur carrier)-H + 5'-deoxyadenosine + L-methionine + A + S-adenosyl-L-homocysteine + 2 H(+). Its function is as follows. Catalyzes the methylthiolation of N6-(dimethylallyl)adenosine (i(6)A), leading to the formation of 2-methylthio-N6-(dimethylallyl)adenosine (ms(2)i(6)A) at position 37 in tRNAs that read codons beginning with uridine. This Acidovorax sp. (strain JS42) protein is tRNA-2-methylthio-N(6)-dimethylallyladenosine synthase.